A 296-amino-acid chain; its full sequence is Ribosomal protein L11 methyltransferase (296 aa).

Positions 146, 167, 189, and 231 each coordinate S-adenosyl-L-methionine.

The protein belongs to the methyltransferase superfamily. PrmA family.

Its subcellular location is the cytoplasm. The catalysed reaction is L-lysyl-[protein] + 3 S-adenosyl-L-methionine = N(6),N(6),N(6)-trimethyl-L-lysyl-[protein] + 3 S-adenosyl-L-homocysteine + 3 H(+). In terms of biological role, methylates ribosomal protein L11. The sequence is that of Ribosomal protein L11 methyltransferase from Haemophilus influenzae (strain ATCC 51907 / DSM 11121 / KW20 / Rd).